A 257-amino-acid polypeptide reads, in one-letter code: Zinc finger protein 8 (257 aa).

Disordered stretches follow at residues 48–92 (GDNS…NNNN), 108–128 (QALG…KRGS), and 214–238 (GVYS…PNNW). A compositionally biased stretch (polar residues) spans 50 to 65 (NSDNLSAEPSDHQTTT). The segment covering 66-92 (KNDESSENIKDKDKEKDKDKDKDNNNN) has biased composition (basic and acidic residues). The C2H2-type zinc-finger motif lies at 95–117 (FECHYCFRNFPTSQALGGHQNAH). Residues 115-126 (NAHKRERQHAKR) show a composition bias toward basic residues.

In terms of tissue distribution, expressed in developing cauline leaves.

The protein localises to the nucleus. Its function is as follows. Probable transcription factor required for the initiation of inflorescence trichomes in response to gibberellin and cytokinin. Is not involved in the regulation of trichome branching. Is functionally equivalent to GIS2. Acts as a negative regulator of abscisic acid (ABA) signaling during germination and early seedling development. The chain is Zinc finger protein 8 from Arabidopsis thaliana (Mouse-ear cress).